The sequence spans 325 residues: Solute-binding protein Bpro_4736 (325 aa).

The N-terminal stretch at 1–27 (MKTRTLKVLKPTLALLLAASFSAGALA) is a signal peptide. A phenylglyoxylate-binding site is contributed by 168 to 173 (RISPVY).

It belongs to the bacterial solute-binding protein 7 family. As to quaternary structure, the complex is comprised of an extracytoplasmic solute-binding protein and a heteromeric permease formed by two transmembrane proteins.

The protein resides in the periplasm. Its function is as follows. Solute-binding protein that binds phenylglyoxylate (in vitro). Probably part of a tripartite ATP-independent periplasmic (TRAP) transport system that mediates solute transport into the cytoplasm. This Polaromonas sp. (strain JS666 / ATCC BAA-500) protein is Solute-binding protein Bpro_4736.